Reading from the N-terminus, the 251-residue chain is Segregation and condensation protein A (251 aa).

Belongs to the ScpA family. In terms of assembly, component of a cohesin-like complex composed of ScpA, ScpB and the Smc homodimer, in which ScpA and ScpB bind to the head domain of Smc. The presence of the three proteins is required for the association of the complex with DNA.

It is found in the cytoplasm. In terms of biological role, participates in chromosomal partition during cell division. May act via the formation of a condensin-like complex containing Smc and ScpB that pull DNA away from mid-cell into both cell halves. This Clostridium botulinum (strain Alaska E43 / Type E3) protein is Segregation and condensation protein A.